We begin with the raw amino-acid sequence, 305 residues long: tRNA N6-adenosine threonylcarbamoyltransferase (305 aa).

Residues histidine 108 and histidine 112 each coordinate Fe cation. Substrate-binding positions include valine 130–glycine 134, aspartate 163, glycine 176, aspartate 180, and asparagine 264. Aspartate 288 lines the Fe cation pocket.

This sequence belongs to the KAE1 / TsaD family. It depends on Fe(2+) as a cofactor.

It localises to the cytoplasm. It catalyses the reaction L-threonylcarbamoyladenylate + adenosine(37) in tRNA = N(6)-L-threonylcarbamoyladenosine(37) in tRNA + AMP + H(+). Required for the formation of a threonylcarbamoyl group on adenosine at position 37 (t(6)A37) in tRNAs that read codons beginning with adenine. Is involved in the transfer of the threonylcarbamoyl moiety of threonylcarbamoyl-AMP (TC-AMP) to the N6 group of A37, together with TsaE and TsaB. TsaD likely plays a direct catalytic role in this reaction. This chain is tRNA N6-adenosine threonylcarbamoyltransferase, found in Mycoplasma mobile (strain ATCC 43663 / 163K / NCTC 11711) (Mesomycoplasma mobile).